The chain runs to 847 residues: Follistatin-related protein 5 (847 aa).

The first 20 residues, 1-20 (MFKCWSVVLVLGFIFLESEG), serve as a signal peptide directing secretion. The region spanning 83–135 (GQAECACMDLCKRHYKPVCGSDGEFYENHCEVHRAACLKKQKITIVHNEDCFF) is the Kazal-like domain. 3 cysteine pairs are disulfide-bonded: Cys-89–Cys-119, Cys-93–Cys-112, and Cys-101–Cys-133. EF-hand domains are found at residues 175 to 210 (RKKLLVDQMFKYFDADSNGLVDINELTQVIKQEELG) and 211 to 246 (KDLFDCTLYVLLKYDDFNADKHLALEEFYRAFQVIQ). Asp-188, Asp-190, Asn-192, Glu-199, Asp-226, Asn-228, Asp-230, His-232, and Glu-237 together coordinate Ca(2+). Ig-like domains follow at residues 250-337 (PEDQ…IFQV) and 341-426 (PVIR…EDIS). Disulfide bonds link Cys-270-Cys-321 and Cys-362-Cys-413. N-linked (GlcNAc...) asparagine glycosylation is found at Asn-318 and Asn-394.

The protein resides in the secreted. This chain is Follistatin-related protein 5 (FSTL5), found in Homo sapiens (Human).